The following is a 140-amino-acid chain: Large-conductance mechanosensitive channel 2 (140 aa).

3 consecutive transmembrane segments (helical) span residues 8–28 (FISKGNVMDLAVGVIIGAAFG), 30–50 (IVDSLVNDIIMPVIGAIFGGL), and 81–101 (GSFITVALNFVILAFIIFLMV).

This sequence belongs to the MscL family. In terms of assembly, homopentamer.

It is found in the cell inner membrane. Its function is as follows. Channel that opens in response to stretch forces in the membrane lipid bilayer. May participate in the regulation of osmotic pressure changes within the cell. The chain is Large-conductance mechanosensitive channel 2 from Mesorhizobium japonicum (strain LMG 29417 / CECT 9101 / MAFF 303099) (Mesorhizobium loti (strain MAFF 303099)).